Here is a 185-residue protein sequence, read N- to C-terminus: Threonylcarbamoyl-AMP synthase (185 aa).

The 182-residue stretch at 4-185 (SWRVQQAARE…LATGEIVRPG (182 aa)) folds into the YrdC-like domain.

The protein belongs to the SUA5 family. TsaC subfamily.

It localises to the cytoplasm. The catalysed reaction is L-threonine + hydrogencarbonate + ATP = L-threonylcarbamoyladenylate + diphosphate + H2O. Its function is as follows. Required for the formation of a threonylcarbamoyl group on adenosine at position 37 (t(6)A37) in tRNAs that read codons beginning with adenine. Catalyzes the conversion of L-threonine, HCO(3)(-)/CO(2) and ATP to give threonylcarbamoyl-AMP (TC-AMP) as the acyladenylate intermediate, with the release of diphosphate. In Pseudomonas putida (strain W619), this protein is Threonylcarbamoyl-AMP synthase.